The chain runs to 216 residues: Inner membrane assembly complex subunit 22 (216 aa).

Residues 1-26 constitute a mitochondrion transit peptide; the sequence is MFMARQVLRNGLFLRSLAPIKITART. Residues 27 to 43 are Mitochondrial matrix-facing; that stretch reads VASANAGIKRKSRFDKT. A helical transmembrane segment spans residues 44–63; the sequence is MIKPLLLVMIFGSILNAVIA. Residues 64–93 adopt a coiled-coil conformation; it reads EKRNIIDMERKYKLKLDKLKELIRRVHDNN. Over 64-216 the chain is Mitochondrial intermembrane; that stretch reads EKRNIIDMER…KEHDKIPKFL (153 aa).

Component of the inner membrane assembly (INA) complex, composed of INA17 and INA22. Interacts with a subset of F(1)F(0)-ATP synthase subunits of the F(1)-domain and the peripheral stalk.

Its subcellular location is the mitochondrion inner membrane. Functionally, component of the INA complex (INAC) that promotes the biogenesis of mitochondrial F(1)F(0)-ATP synthase. INAC facilitates the assembly of the peripheral stalk and promotes the assembly of the catalytic F(1)-domain with the membrane-embedded F(0)-domain. In Saccharomyces cerevisiae (strain ATCC 204508 / S288c) (Baker's yeast), this protein is Inner membrane assembly complex subunit 22.